Here is an 899-residue protein sequence, read N- to C-terminus: Alanine--tRNA ligase (899 aa).

Residues His-595, His-599, Cys-703, and His-707 each coordinate Zn(2+).

It belongs to the class-II aminoacyl-tRNA synthetase family. Requires Zn(2+) as cofactor.

Its subcellular location is the cytoplasm. It catalyses the reaction tRNA(Ala) + L-alanine + ATP = L-alanyl-tRNA(Ala) + AMP + diphosphate. Its function is as follows. Catalyzes the attachment of alanine to tRNA(Ala) in a two-step reaction: alanine is first activated by ATP to form Ala-AMP and then transferred to the acceptor end of tRNA(Ala). Also edits incorrectly charged Ser-tRNA(Ala) and Gly-tRNA(Ala) via its editing domain. This Caldivirga maquilingensis (strain ATCC 700844 / DSM 13496 / JCM 10307 / IC-167) protein is Alanine--tRNA ligase.